Reading from the N-terminus, the 151-residue chain is Protein SprT-like (151 aa).

The region spanning 7–146 (QSLTESIAIK…CGRCGGILKL (140 aa)) is the SprT-like domain. Residue histidine 67 coordinates Zn(2+). Glutamate 68 is an active-site residue. Histidine 71 contributes to the Zn(2+) binding site.

This sequence belongs to the SprT family. Requires Zn(2+) as cofactor.

The protein resides in the cytoplasm. This chain is Protein SprT-like, found in Staphylococcus epidermidis (strain ATCC 35984 / DSM 28319 / BCRC 17069 / CCUG 31568 / BM 3577 / RP62A).